The primary structure comprises 56 residues: Ribosome modulation factor (56 aa).

The protein belongs to the ribosome modulation factor family.

It localises to the cytoplasm. Functionally, during stationary phase, converts 70S ribosomes to an inactive dimeric form (100S ribosomes). This is Ribosome modulation factor from Proteus mirabilis (strain HI4320).